A 344-amino-acid polypeptide reads, in one-letter code: Protein RecA (344 aa).

66 to 73 (GPESSGKT) contributes to the ATP binding site.

The protein belongs to the RecA family.

Its subcellular location is the cytoplasm. Its function is as follows. Can catalyze the hydrolysis of ATP in the presence of single-stranded DNA, the ATP-dependent uptake of single-stranded DNA by duplex DNA, and the ATP-dependent hybridization of homologous single-stranded DNAs. It interacts with LexA causing its activation and leading to its autocatalytic cleavage. The protein is Protein RecA of Azoarcus sp. (strain BH72).